The following is a 371-amino-acid chain: MPHQQMLILFGLLPVATNISTWWNFGSMLLTCSALQVMTGFSLSMHYTANINLAFCSIIHITRDVPHGWVMQNLHAIGASMFFICIYMYIARGLYYGSYLNKETWLSGTTLLIMLMATAFFGYVLPWGQMSFWAATVITNLLTAIPYLGTTMTTWLWGGFAINDPTLTRFFALHFILPFGIISVSSIHIMLLHEDGSGNPLGTNSDIDKIPFHPYHTYKDILMISIMIITLLLTVSFFPDIMNDPENFSKANPLVTPQHIKPEWYFLFAYGILRSIPNKLGGALALVMSIMILFTMPFTHTSPMRSLTFRPLMQFMFWTLVATFVIITWTATKPVEPPFTTISQVASIIYFTFFMSNPILGWLENKITKHN.

Helical transmembrane passes span 25-45 (FGSM…SLSM), 69-90 (WVMQ…YMYI), 105-125 (WLSG…GYVL), and 170-190 (FFAL…IHIM). His75 provides a ligand contact to heme b. Heme b-binding residues include His174 and His188. His193 serves as a coordination point for a ubiquinone. The next 4 membrane-spanning stretches (helical) occupy residues 218–238 (YKDI…VSFF), 280–300 (LGGA…PFTH), 312–332 (LMQF…WTAT), and 339–358 (FTTI…MSNP).

The protein belongs to the cytochrome b family. As to quaternary structure, the cytochrome bc1 complex contains 3 respiratory subunits (MT-CYB, CYC1 and UQCRFS1), 2 core proteins (UQCRC1 and UQCRC2) and probably 6 low-molecular weight proteins. The cofactor is heme b.

The protein resides in the mitochondrion inner membrane. In terms of biological role, component of the ubiquinol-cytochrome c reductase complex (complex III or cytochrome b-c1 complex) that is part of the mitochondrial respiratory chain. The b-c1 complex mediates electron transfer from ubiquinol to cytochrome c. Contributes to the generation of a proton gradient across the mitochondrial membrane that is then used for ATP synthesis. This Candoia aspera (New Guinea boa) protein is Cytochrome b (MT-CYB).